The primary structure comprises 376 residues: MEPENAQGKSPAENEQEVVPDVASAMSASSEALEFLCSVGLEELNLCLFTDSLATVSVSGVELGNFAVSVQPAYYQLDGLEEEKCFLVHAASQGTIDGVPCGTSIIGHISYKLETLEQHVHEYVKLKGHSLDKKTQIVRQGDKLVINRIITEGEKLHRETSSHSTSLLSGLISEAANLLIMRILARRKIKDPLKFLAFDEEGNLCTSTYAPLGSQAQVIGKEMVDVFGIERTIHSPEVPTTWQCFFLSDGHLASHVQIGSPVTIKLNEMPVLSEPDEKDPKPVFEKKPLAWQEDLQLHSEFLDRKEELISDHETYLRRHPEVKVLLADFMQFLLLRKPDDIMDFAAEYFKPFSSTQEPNDPFVSSHHASPFRNVSH.

A disordered region spans residues 355–376 (TQEPNDPFVSSHHASPFRNVSH).

The protein belongs to the CATIP family.

Its subcellular location is the nucleus. The protein resides in the cytoplasm. The protein localises to the cell membrane. It is found in the cytoskeleton. Functionally, plays a role in primary ciliogenesis by modulating actin polymerization. In Xenopus laevis (African clawed frog), this protein is Ciliogenesis-associated TTC17-interacting protein (catip).